Reading from the N-terminus, the 333-residue chain is Small GTPase-like protein LIP2 (333 aa).

Residues 11–288 (NKEHMVAPLC…YKYNTLPQHN (278 aa)) are small GTPase-like. Residues 29–36 (GDSGVGKS), 90–94 (DVSGH), and 160–163 (NKAD) contribute to the GTP site. Residues 242–253 (SPSSAWSLSHAP) show a composition bias toward polar residues. The tract at residues 242–265 (SPSSAWSLSHAPSQRLDEGTSDED) is disordered.

It belongs to the small GTPase superfamily.

The chain is Small GTPase-like protein LIP2 from Arabidopsis thaliana (Mouse-ear cress).